Consider the following 179-residue polypeptide: Large ribosomal subunit protein uL6 (179 aa).

The protein belongs to the universal ribosomal protein uL6 family. In terms of assembly, part of the 50S ribosomal subunit.

In terms of biological role, this protein binds to the 23S rRNA, and is important in its secondary structure. It is located near the subunit interface in the base of the L7/L12 stalk, and near the tRNA binding site of the peptidyltransferase center. In Synechococcus elongatus (strain ATCC 33912 / PCC 7942 / FACHB-805) (Anacystis nidulans R2), this protein is Large ribosomal subunit protein uL6.